Consider the following 633-residue polypeptide: uncharacterized protein (633 aa).

This is an uncharacterized protein from Acanthamoeba polyphaga mimivirus (APMV).